The chain runs to 435 residues: Glutamate-1-semialdehyde 2,1-aminomutase (435 aa).

The residue at position 266 (Lys266) is an N6-(pyridoxal phosphate)lysine.

Belongs to the class-III pyridoxal-phosphate-dependent aminotransferase family. HemL subfamily. In terms of assembly, homodimer. Requires pyridoxal 5'-phosphate as cofactor.

The protein resides in the cytoplasm. It carries out the reaction (S)-4-amino-5-oxopentanoate = 5-aminolevulinate. It functions in the pathway porphyrin-containing compound metabolism; protoporphyrin-IX biosynthesis; 5-aminolevulinate from L-glutamyl-tRNA(Glu): step 2/2. This is Glutamate-1-semialdehyde 2,1-aminomutase from Coxiella burnetii (strain RSA 331 / Henzerling II).